The chain runs to 412 residues: 2-methylacyl-CoA dehydrogenase, mitochondrial (412 aa).

A mitochondrion-targeting transit peptide spans 1 to 25; that stretch reads MHKLFAVRSLSSAIVKSFKSLQNQQ. FAD contacts are provided by residues 154–163 and 187–189; these read LAMSEPNAGS and WCT. Serine 163 contributes to the substrate binding site. Residues 209–210, tyrosine 264, and 271–274 contribute to the substrate site; these read SK and DLER. The active-site Proton acceptor is glutamate 273. Residues arginine 299, glutamine 310, and 367–371 contribute to the FAD site; that span reads QCLGG. 394 to 395 contributes to the substrate binding site; the sequence is AG. 396 to 398 contacts FAD; that stretch reads TSE.

It belongs to the acyl-CoA dehydrogenase family. Homotetramer. FAD is required as a cofactor. Expressed in flowers.

The protein localises to the mitochondrion. The enzyme catalyses 2-methylbutanoyl-CoA + oxidized [electron-transfer flavoprotein] + H(+) = (2E)-2-methylbut-2-enoyl-CoA + reduced [electron-transfer flavoprotein]. Short/branched-chain acyl-CoA dehydrogenase (SBCAD). Uses 2-methylbutanoyl-CoA as substrate. Minor activity with the straight-chain substrates, butanoyl-CoA, valeryl-CoA, hexanoyl-CoA, and octanoyl-CoA but no activity with isovaleryl-CoA. This chain is 2-methylacyl-CoA dehydrogenase, mitochondrial (2MBCD), found in Solanum tuberosum (Potato).